A 412-amino-acid polypeptide reads, in one-letter code: Protein MT3510 (412 aa).

N6-(pyridoxal phosphate)lysine is present on Lys-227.

The protein belongs to the DegT/DnrJ/EryC1 family.

The sequence is that of Protein MT3510 from Mycobacterium tuberculosis (strain CDC 1551 / Oshkosh).